A 420-amino-acid polypeptide reads, in one-letter code: Beta-arrestin-2 (420 aa).

Tyr48 bears the Phosphotyrosine mark. A hydroxyproline; by PHD2 mark is found at Pro176 and Pro181. The tract at residues Ala240 to Gly409 is interaction with TRAF6. Residue Ser360 is modified to Phosphoserine. The tract at residues Pro374–Cys420 is interaction with AP2B1. Thr393 carries the post-translational modification Phosphothreonine. Positions Asp396–Arg406 match the [DE]-X(1,2)-F-X-X-[FL]-X-X-X-R motif motif.

The protein belongs to the arrestin family. As to quaternary structure, homooligomer; the self-association is mediated by InsP6-binding. Heterooligomer with ARRB1; the association is mediated by InsP6-binding. Interacts with ADRB2 and CHRM2. Interacts with PDE4A. Interacts with PDE4D. Interacts with MAPK10, MAPK1 and MAPK3. Interacts with DRD2. Interacts with FSHR. Interacts with CLTC. Interacts with HTR2C. Interacts with CRR5. Interacts with CXCR4. Interacts with SRC. Interacts with DUSP16; the interaction is interrupted by stimulation of AGTR1 and activation of MAPK10. Interacts with CHUK; the interaction is enhanced stimulation of ADRB2. Interacts with RELA. Interacts with MDM2; the interaction is enhanced by activation of GPCRs. Interacts with SLC9A5. Interacts with TRAF6. Interacts with IGF1R. Interacts with ENG. Interacts with KIR2DL1, KIR2DL3 and KIR2DL4. Interacts with LDLR. Interacts with AP2B1. Interacts with C5AR1. Interacts with RAF1. Interacts with MAP2K1. Interacts with MAPK1. Interacts with MAPK10; the interaction enhances MAPK10 activation by MAP3K5. Interacts with MAP2K4; the interaction is enhanced by presence of MAP3K5 and MAPK10. Interacts with MAP3K5. Interacts with AKT1. Interacts with IKBKB and MAP3K14. Interacts with SMO (activated). Interacts with GSK3A and GSK3B. Associates with protein phosphatase 2A (PP2A). Interacts with CXCR4; the interaction is dependent on C-terminal phosphorylation of CXCR4 and allows activation of MAPK1 and MAPK3. Interacts with GPR143. Interacts with HCK and CXCR1 (phosphorylated). Interacts with ACKR3 and ACKR4. Interacts with ARRDC1; the interaction is direct. Interacts with GPR61, GPR62 and GPR135. Interacts (via NACHT and LRR domains) with NLRP3; this interaction is direct and inducible by omega-3 polyunsaturated fatty acids (PUFAs). Interacts with FFAR4 (via C-terminus); this interaction is stimulated by long-chain fatty acids (LCFAs). Interacts with GPR35. Interacts with GPR84. Interacts with TIGIT; this interaction inhibits the NF-kappa-B pathway. Interacts with TGFBR3. In terms of processing, phosphorylated at Thr-382 in the cytoplasm; probably dephosphorylated at the plasma membrane. The phosphorylation does not regulate internalization and recycling of ADRB2, interaction with clathrin or AP2B1. Post-translationally, the ubiquitination status appears to regulate the formation and trafficking of beta-arrestin-GPCR complexes and signaling. Ubiquitination appears to occur GPCR-specific. Ubiquitinated by MDM2; the ubiquitination is required for rapid internalization of ADRB2. Deubiquitinated by USP33; the deubiquitination leads to a dissociation of the beta-arrestin-GPCR complex. Stimulation of a class A GPCR, such as ADRB2, induces transient ubiquitination and subsequently promotes association with USP33. Stimulation of a class B GPCR promotes a sustained ubiquitination. Deubiquitinated by USP20; allowing USP20 to deubiquitinate TRAF6 leading to inhibition of NF-kappa-B signaling. Hydroxylation by PHD2 modulates the rate of internalization by slowing down recruitment to the plasma membrane and inhibiting subsequent co-internalization with class A receptors. As to expression, found in a variety of tissues. The short isoform is the most abundant form in all tissues.

Its subcellular location is the cytoplasm. The protein localises to the nucleus. The protein resides in the cell membrane. It localises to the membrane. It is found in the clathrin-coated pit. Its subcellular location is the cytoplasmic vesicle. Functions in regulating agonist-mediated G-protein coupled receptor (GPCR) signaling by mediating both receptor desensitization and resensitization processes. During homologous desensitization, beta-arrestins bind to the GPRK-phosphorylated receptor and sterically preclude its coupling to the cognate G-protein; the binding appears to require additional receptor determinants exposed only in the active receptor conformation. The beta-arrestins target many receptors for internalization by acting as endocytic adapters (CLASPs, clathrin-associated sorting proteins) and recruiting the GPRCs to the adapter protein 2 complex 2 (AP-2) in clathrin-coated pits (CCPs). However, the extent of beta-arrestin involvement appears to vary significantly depending on the receptor, agonist and cell type. Internalized arrestin-receptor complexes traffic to intracellular endosomes, where they remain uncoupled from G-proteins. Two different modes of arrestin-mediated internalization occur. Class A receptors, like ADRB2, OPRM1, ENDRA, D1AR and ADRA1B dissociate from beta-arrestin at or near the plasma membrane and undergo rapid recycling. Class B receptors, like AVPR2, AGTR1, NTSR1, TRHR and TACR1 internalize as a complex with arrestin and traffic with it to endosomal vesicles, presumably as desensitized receptors, for extended periods of time. Receptor resensitization then requires that receptor-bound arrestin is removed so that the receptor can be dephosphorylated and returned to the plasma membrane. Mediates endocytosis of CCR7 following ligation of CCL19 but not CCL21. Involved in internalization of P2RY1, P2RY4, P2RY6 and P2RY11 and ATP-stimulated internalization of P2RY2. Involved in phosphorylation-dependent internalization of OPRD1 and subsequent recycling or degradation. Involved in ubiquitination of IGF1R. Beta-arrestins function as multivalent adapter proteins that can switch the GPCR from a G-protein signaling mode that transmits short-lived signals from the plasma membrane via small molecule second messengers and ion channels to a beta-arrestin signaling mode that transmits a distinct set of signals that are initiated as the receptor internalizes and transits the intracellular compartment. Acts as a signaling scaffold for MAPK pathways such as MAPK1/3 (ERK1/2) and MAPK10 (JNK3). ERK1/2 and JNK3 activated by the beta-arrestin scaffold are largely excluded from the nucleus and confined to cytoplasmic locations such as endocytic vesicles, also called beta-arrestin signalosomes. Acts as a signaling scaffold for the AKT1 pathway. GPCRs for which the beta-arrestin-mediated signaling relies on both ARRB1 and ARRB2 (codependent regulation) include ADRB2, F2RL1 and PTH1R. For some GPCRs the beta-arrestin-mediated signaling relies on either ARRB1 or ARRB2 and is inhibited by the other respective beta-arrestin form (reciprocal regulation). Increases ERK1/2 signaling in AGTR1- and AVPR2-mediated activation (reciprocal regulation). Involved in CCR7-mediated ERK1/2 signaling involving ligand CCL19. Is involved in type-1A angiotensin II receptor/AGTR1-mediated ERK activity. Is involved in type-1A angiotensin II receptor/AGTR1-mediated MAPK10 activity. Is involved in dopamine-stimulated AKT1 activity in the striatum by disrupting the association of AKT1 with its negative regulator PP2A. Involved in AGTR1-mediated chemotaxis. Appears to function as signaling scaffold involved in regulation of MIP-1-beta-stimulated CCR5-dependent chemotaxis. Involved in attenuation of NF-kappa-B-dependent transcription in response to GPCR or cytokine stimulation by interacting with and stabilizing CHUK. Suppresses UV-induced NF-kappa-B-dependent activation by interacting with CHUK. The function is promoted by stimulation of ADRB2 and dephosphorylation of ARRB2. Involved in p53/TP53-mediated apoptosis by regulating MDM2 and reducing the MDM2-mediated degradation of p53/TP53. May serve as nuclear messenger for GPCRs. Upon stimulation of OR1D2, may be involved in regulation of gene expression during the early processes of fertilization. Also involved in regulation of receptors other than GPCRs. Involved in endocytosis of TGFBR2 and TGFBR3 and down-regulates TGF-beta signaling such as NF-kappa-B activation. Involved in endocytosis of low-density lipoprotein receptor/LDLR. Involved in endocytosis of smoothened homolog/Smo, which also requires GRK2. Involved in endocytosis of SLC9A5. Involved in endocytosis of ENG and subsequent TGF-beta-mediated ERK activation and migration of epithelial cells. Involved in Toll-like receptor and IL-1 receptor signaling through the interaction with TRAF6 which prevents TRAF6 autoubiquitination and oligomerization required for activation of NF-kappa-B and JUN. Involved in insulin resistance by acting as insulin-induced signaling scaffold for SRC, AKT1 and INSR. Involved in regulation of inhibitory signaling of natural killer cells by recruiting PTPN6 and PTPN11 to KIR2DL1. Involved in IL8-mediated granule release in neutrophils. Involved in the internalization of the atypical chemokine receptor ACKR3. Acts as an adapter protein coupling FFAR4 receptor to specific downstream signaling pathways, as well as mediating receptor endocytosis. During the activation step of NLRP3 inflammasome, directly associates with NLRP3 leading to inhibition of pro-inflammatory cytokine release and inhibition of inflammation. The polypeptide is Beta-arrestin-2 (ARRB2) (Bos taurus (Bovine)).